Consider the following 330-residue polypeptide: Mas-related G-protein coupled receptor member X2 (330 aa).

Residues 1–33 (MDPTTPAWGNESTTMNGNDQALPLLCGKETLIP) are Extracellular-facing. A helical membrane pass occupies residues 34–54 (VFLILFIALVGLVGNGFVLWL). Topologically, residues 55–63 (LGFCMRRNA) are cytoplasmic. The helical transmembrane segment at 64–84 (FSVYVLSLAGADFLFLCFQLI) threads the bilayer. Residues 85-96 (NCLVYLSNFFCS) are Extracellular-facing. A helical transmembrane segment spans residues 97 to 117 (ISIDFPSFFTTVMTCAYLAGL). Residues 118–144 (SMLSTISTERCLSVLWPIWYRCRRPRH) lie on the Cytoplasmic side of the membrane. Residues 145–165 (LSAVVCVLLWALSLLLSILEG) form a helical membrane-spanning segment. Residues 166-184 (KFCGFFFSDGDSGWCQTFD) are Extracellular-facing. The helical transmembrane segment at 185–205 (FITAAWLIFLFMVLCGSSLAL) threads the bilayer. At 206–228 (LVRILCGSRGLPLTRLYLTILLT) the chain is on the cytoplasmic side. A helical transmembrane segment spans residues 229–249 (VLVFLLCGLPFGIQWFLILWI). Residues 250-264 (WENSDVLFCHIHPVS) lie on the Extracellular side of the membrane. Residues 265-285 (VVLSSLNSSANPIIYFFVGTF) form a helical membrane-spanning segment. Residues 286 to 330 (RKQWRLQQPILKLALQRALQDTAEVDHSEGCFRQGTPEMSRSSLV) are Cytoplasmic-facing.

It belongs to the G-protein coupled receptor 1 family. Mas subfamily.

The protein resides in the cell membrane. Mast cell-specific receptor for basic secretagogues, i.e. cationic amphiphilic drugs, as well as endo- or exogenous peptides, consisting of a basic head group and a hydrophobic core. Recognizes and binds small molecules containing a cyclized tetrahydroisoquinoline (THIQ), such as non-steroidal neuromuscular blocking drugs (NMBDs), including tubocurarine and atracurium. In response to these compounds, mediates pseudo-allergic reactions characterized by histamine release, inflammation and airway contraction. The polypeptide is Mas-related G-protein coupled receptor member X2 (MRGPRX2) (Pongo pygmaeus (Bornean orangutan)).